The chain runs to 157 residues: Large ribosomal subunit protein eL24 (157 aa).

Residues 95–157 (NQKPEVRKAQ…VSAPRVGGKR (63 aa)) form a disordered region. The span at 96-117 (QKPEVRKAQREQAIRAAKEAKK) shows a compositional bias: basic and acidic residues. The segment covering 123 to 145 (KKQTTQSSKAPAKSAQKQKIAKP) has biased composition (low complexity).

The protein belongs to the eukaryotic ribosomal protein eL24 family. Component of the large ribosomal subunit.

The protein resides in the cytoplasm. Functionally, component of the large ribosomal subunit. The ribosome is a large ribonucleoprotein complex responsible for the synthesis of proteins in the cell. Plays an essential role in early embryonic development. In Danio rerio (Zebrafish), this protein is Large ribosomal subunit protein eL24 (rpl24).